The primary structure comprises 186 residues: Potassium-transporting ATPase KdpC subunit (186 aa).

A helical transmembrane segment spans residues 10 to 30 (LTIITMVLCGFLFPLAITLIG).

This sequence belongs to the KdpC family. The system is composed of three essential subunits: KdpA, KdpB and KdpC.

It localises to the cell membrane. Its function is as follows. Part of the high-affinity ATP-driven potassium transport (or Kdp) system, which catalyzes the hydrolysis of ATP coupled with the electrogenic transport of potassium into the cytoplasm. This subunit acts as a catalytic chaperone that increases the ATP-binding affinity of the ATP-hydrolyzing subunit KdpB by the formation of a transient KdpB/KdpC/ATP ternary complex. The chain is Potassium-transporting ATPase KdpC subunit from Staphylococcus aureus (strain MRSA252).